The primary structure comprises 209 residues: MKRLWDISPPISSQSPVFPGDTPYRQQWKWQLSPECPVNVSEITMSPHIGAHADAPLHYANGATAAGCLPLEPFLGPCRVIHALDCGPLILPEHLAHAADDMPERVLVRTAQHAAVHWWTDDFSAYAPQTIEWLASLGVRLIGIDTPSIDPATSKTLDSHHVILRRDIRVLENLVLDTVEPGDYELIALPLALVQADASPVRAVLRELG.

F18 provides a ligand contact to substrate. Zn(2+)-binding residues include H48, H52, and D54. Residue H58 is the Proton donor/acceptor of the active site. Residues H160 and E172 each coordinate Zn(2+).

Belongs to the Cyclase 1 superfamily. KynB family. As to quaternary structure, homodimer. Requires Zn(2+) as cofactor.

It carries out the reaction N-formyl-L-kynurenine + H2O = L-kynurenine + formate + H(+). The protein operates within amino-acid degradation; L-tryptophan degradation via kynurenine pathway; L-kynurenine from L-tryptophan: step 2/2. Its function is as follows. Catalyzes the hydrolysis of N-formyl-L-kynurenine to L-kynurenine, the second step in the kynurenine pathway of tryptophan degradation. The protein is Kynurenine formamidase of Bordetella avium (strain 197N).